A 191-amino-acid polypeptide reads, in one-letter code: Leucyl/phenylalanyl-tRNA--protein transferase (191 aa).

Belongs to the L/F-transferase family.

It localises to the cytoplasm. The catalysed reaction is N-terminal L-lysyl-[protein] + L-leucyl-tRNA(Leu) = N-terminal L-leucyl-L-lysyl-[protein] + tRNA(Leu) + H(+). It carries out the reaction N-terminal L-arginyl-[protein] + L-leucyl-tRNA(Leu) = N-terminal L-leucyl-L-arginyl-[protein] + tRNA(Leu) + H(+). It catalyses the reaction L-phenylalanyl-tRNA(Phe) + an N-terminal L-alpha-aminoacyl-[protein] = an N-terminal L-phenylalanyl-L-alpha-aminoacyl-[protein] + tRNA(Phe). Functionally, functions in the N-end rule pathway of protein degradation where it conjugates Leu, Phe and, less efficiently, Met from aminoacyl-tRNAs to the N-termini of proteins containing an N-terminal arginine or lysine. The sequence is that of Leucyl/phenylalanyl-tRNA--protein transferase from Gloeothece citriformis (strain PCC 7424) (Cyanothece sp. (strain PCC 7424)).